The following is a 301-amino-acid chain: Probable alpha-L-glutamate ligase (301 aa).

Residues 104–287 (LQLLSRRGIG…VAGMIIGYLE (184 aa)) form the ATP-grasp domain. ATP contacts are provided by residues K141, 178–179 (EY), D187, and 211–213 (RSN). D248, E260, and N262 together coordinate Mg(2+). Positions 248, 260, and 262 each coordinate Mn(2+).

It belongs to the RimK family. It depends on Mg(2+) as a cofactor. Mn(2+) is required as a cofactor.

This chain is Probable alpha-L-glutamate ligase, found in Pseudomonas syringae pv. syringae (strain B728a).